A 408-amino-acid polypeptide reads, in one-letter code: Indian hedgehog protein (408 aa).

Residues 1 to 23 form the signal peptide; the sequence is MKPARLLLLLSGCALLLAPAVRC. Cysteine 24 carries N-palmitoyl cysteine lipidation. Residues glutamate 90, glutamate 91, aspartate 96, threonine 126, glutamate 127, aspartate 130, and aspartate 132 each contribute to the Ca(2+) site. Residues histidine 141, aspartate 148, and histidine 183 each contribute to the Zn(2+) site. A lipid anchor (Cholesterol glycine ester) is attached at glycine 198.

This sequence belongs to the hedgehog family. In terms of assembly, multimer. As to quaternary structure, interacts with BOC and CDON. Interacts with PTCH1. Interacts with glypican GPC3. Cholesterylation is required for N-product targeting to lipid rafts and multimerization. In terms of processing, the C-terminal domain displays an autoproteolysis activity and a cholesterol transferase activity. Both activities result in the cleavage of the full-length protein and covalent attachment of a cholesterol moiety to the C-terminal of the newly generated N-product. The N-product is the active species in both local and long-range signaling, whereas the C-product is degraded in the endoplasmic reticulum. Post-translationally, N-palmitoylation by HHAT of N-product is required for indian hedgehog protein N-product multimerization and full activity. As to expression, expressed in developing midgut, lung and cartilage of developing long bones in the limb.

The protein localises to the cell membrane. It is found in the endoplasmic reticulum membrane. The protein resides in the golgi apparatus membrane. Its subcellular location is the secreted. The enzyme catalyses glycyl-L-cysteinyl-[protein] + cholesterol + H(+) = [protein]-C-terminal glycyl cholesterol ester + N-terminal L-cysteinyl-[protein]. In terms of biological role, plays a role in embryonic morphogenesis; it is involved in the regulation of endochondral skeleton formation, and the development of retinal pigment epithelium (RPE), photoreceptors and periocular tissues. The C-terminal part of the indian hedgehog protein precursor displays an autoproteolysis and a cholesterol transferase activity. Both activities result in the cleavage of the full-length protein into two parts followed by the covalent attachment of a cholesterol moiety to the C-terminal of the newly generated N-product. Both activities occur in the endoplasmic reticulum. Functionally, the dually lipidated indian hedgehog protein N-product is a morphogen which is essential for a variety of patterning events during development. Binds to the patched (PTCH1) receptor, which functions in association with smoothened (SMO), to activate the transcription of target genes. Plays a role in morphogenesis of the skeleton by coordinating growth and differentiation of the endochondral skeleton. Positively regulates PTHLH expression during endochondral bone formation preventing chondrocyte hypertrophy. In contrast, participates in normal chondrocyte proliferation in a PTHLH-independent pathway. This is Indian hedgehog protein from Gallus gallus (Chicken).